Reading from the N-terminus, the 123-residue chain is F-box protein PP2-B3 (123 aa).

An F-box domain is found at 10–56; that stretch reads PSPFDGLPENCISNIISFTTPRDACFAASVSKAFESAVQSDSVWEKF.

This Arabidopsis thaliana (Mouse-ear cress) protein is F-box protein PP2-B3 (PP2B3).